We begin with the raw amino-acid sequence, 622 residues long: Low affinity potassium transport system protein Kup (622 aa).

Helical transmembrane passes span 9-29 (LPAI…TSPL), 49-69 (VFGF…IKYL), 103-123 (VIMG…TPAI), 137-157 (PQLD…LFMI), 165-185 (VGKL…GLGL), 213-233 (VSFI…ALYA), 247-267 (WFTV…ALLL), 276-296 (PFFL…AALA), 337-357 (IYIP…IVSF), 363-383 (LAAA…ILST), 396-416 (FVAL…TANL), and 419-439 (LLSG…VMTT).

It belongs to the HAK/KUP transporter (TC 2.A.72) family.

The protein localises to the cell inner membrane. The enzyme catalyses K(+)(in) + H(+)(in) = K(+)(out) + H(+)(out). In terms of biological role, responsible for the low-affinity transport of potassium into the cell. Likely operates as a K(+):H(+) symporter. The sequence is that of Low affinity potassium transport system protein Kup from Escherichia coli O157:H7 (strain EC4115 / EHEC).